A 462-amino-acid chain; its full sequence is Cysteine--tRNA ligase (462 aa).

Cys30 is a Zn(2+) binding site. The short motif at Pro32–Asn42 is the 'HIGH' region element. Residues Cys221, His246, and Glu250 each contribute to the Zn(2+) site. A 'KMSKS' region motif is present at residues Lys279 to Ser283. Residue Lys282 coordinates ATP.

This sequence belongs to the class-I aminoacyl-tRNA synthetase family. Monomer. It depends on Zn(2+) as a cofactor.

It is found in the cytoplasm. The enzyme catalyses tRNA(Cys) + L-cysteine + ATP = L-cysteinyl-tRNA(Cys) + AMP + diphosphate. The sequence is that of Cysteine--tRNA ligase from Paracoccus denitrificans (strain Pd 1222).